The chain runs to 485 residues: Noelin (485 aa).

Residues 1-16 (MSVPLLKIGVVLSTMA) form the signal peptide. 8 N-linked (GlcNAc...) asparagine glycosylation sites follow: Asn33, Asn103, Asn187, Asn288, Asn307, Asn394, Asn431, and Asn473. The stretch at 87–225 (RDARTKQLRQ…ERLRACMQKL (139 aa)) forms a coiled coil. Residues 226–478 (ACGKLTGISD…QILYNVTLFH (253 aa)) form the Olfactomedin-like domain. Residues Cys227 and Cys409 are joined by a disulfide bond.

Homotetramer; disulfide-linked. Dimer of dimers, giving rise to a V-shaped homotretramer. Component of the AMPAR complex. In terms of processing, glycosylated.

The protein resides in the secreted. Its subcellular location is the synapse. The protein localises to the endoplasmic reticulum. It is found in the cell projection. It localises to the axon. The protein resides in the perikaryon. Contributes to the regulation of axonal growth. May play an important role in regulating the production of neural crest cells by the neural tube. In Gallus gallus (Chicken), this protein is Noelin (OLFM1).